Consider the following 886-residue polypeptide: Alanine--tRNA ligase (886 aa).

Positions 564, 568, 676, and 680 each coordinate Zn(2+).

Belongs to the class-II aminoacyl-tRNA synthetase family. It depends on Zn(2+) as a cofactor.

The protein resides in the cytoplasm. The catalysed reaction is tRNA(Ala) + L-alanine + ATP = L-alanyl-tRNA(Ala) + AMP + diphosphate. Catalyzes the attachment of alanine to tRNA(Ala) in a two-step reaction: alanine is first activated by ATP to form Ala-AMP and then transferred to the acceptor end of tRNA(Ala). Also edits incorrectly charged Ser-tRNA(Ala) and Gly-tRNA(Ala) via its editing domain. This is Alanine--tRNA ligase from Bartonella bacilliformis (strain ATCC 35685 / KC583 / Herrer 020/F12,63).